A 267-amino-acid chain; its full sequence is 4-hydroxy-tetrahydrodipicolinate reductase (267 aa).

Residues Gly12–Met17, Gly100–Thr102, and Ala126–Phe129 contribute to the NAD(+) site. Residue His156 is the Proton donor/acceptor of the active site. A (S)-2,3,4,5-tetrahydrodipicolinate-binding site is contributed by His157. Catalysis depends on Lys160, which acts as the Proton donor. Gly166 to Thr167 provides a ligand contact to (S)-2,3,4,5-tetrahydrodipicolinate.

Belongs to the DapB family.

Its subcellular location is the cytoplasm. It catalyses the reaction (S)-2,3,4,5-tetrahydrodipicolinate + NAD(+) + H2O = (2S,4S)-4-hydroxy-2,3,4,5-tetrahydrodipicolinate + NADH + H(+). The catalysed reaction is (S)-2,3,4,5-tetrahydrodipicolinate + NADP(+) + H2O = (2S,4S)-4-hydroxy-2,3,4,5-tetrahydrodipicolinate + NADPH + H(+). It functions in the pathway amino-acid biosynthesis; L-lysine biosynthesis via DAP pathway; (S)-tetrahydrodipicolinate from L-aspartate: step 4/4. Its function is as follows. Catalyzes the conversion of 4-hydroxy-tetrahydrodipicolinate (HTPA) to tetrahydrodipicolinate. This is 4-hydroxy-tetrahydrodipicolinate reductase from Bacillus subtilis (strain 168).